Reading from the N-terminus, the 348-residue chain is MAGVTPQLIKELREMTGAGMMDCKNALNETNGDLDKAVQALREAGLGKAAKKAGNVAAEGLISVLVNSDNTKAVLLELNSQTDFVAKNENFVNLTKEITTHALNNGIADAQTLASSKINGEEFQTYLNEKIATIGENLVARKLSLVSGQVVNGYVHATGRVGVVLAATCNDAVKDKAAALLRNIAMHASAMKPTVISYKDLDPAFVESENKAIRAEIEAENDELRRLGKPQKRIPEFVSKSQLTDEAIAAAKARFEDELKAQGKPEKIWANIIPGQIERFIADNTQLDGRFALLSQPYVMDDKKTVEQAIAEVDSSIVITEYIRFELGEGIEKKEEDFAAEVAKQMGK.

The segment at 82–85 is involved in Mg(2+) ion dislocation from EF-Tu; sequence TDFV.

This sequence belongs to the EF-Ts family.

It localises to the cytoplasm. Its function is as follows. Associates with the EF-Tu.GDP complex and induces the exchange of GDP to GTP. It remains bound to the aminoacyl-tRNA.EF-Tu.GTP complex up to the GTP hydrolysis stage on the ribosome. In Aliarcobacter butzleri (strain RM4018) (Arcobacter butzleri), this protein is Elongation factor Ts.